Reading from the N-terminus, the 795-residue chain is MKFSEQWVREWVNPAVNTEQLCDQITMLGLEVDGVEAVAGEFNGVVVGEVVECAQHPDADKLRVTKVNVGGERLLDIVCGAPNCRQGLKVACAIEGAVLPGDFKIKKTKLRGQPSEGMLCSYRELGMSEDHSGIIELPADAPVGKDFREYLILDDKEIEISLTPNRADCLSIAGVAREIGVVNQLAVTEPAINPVPVTSDEKVAINVLAPEACPRYLLRSVKNVNVNAETPVWMKEKLRRCGIRSIDPIVDITNFVLLELGQPMHAFDAAKLAQPVQVRFAADGEELVLLDGTTAKLQSNTLVIADQTGPLAMAGIFGGQASGVNAQTKDVILEAAFFAPLAITGRARQYGLHTDSSHRFERGVDFELQHKAMERATSLLVEICGGEVGEICEVVSETHLPKLNKVQLRRSKLDALLGHHIETETVTEIFHRLGLPVSYENEVWTVTSASWRFDIEIEEDLIEEIARIYGYNSIPNNAPLAHLSMREHHESDLELSRIKLALVGNDFHEAITYSFVDPKLQSILHPEQAVWILPNPISSEMSAMRVSLLTGLLGAVVYNQNRQQNRVRLFETGLRFIPDESAEFGIRQELVFAAVMTGSRLSEHWASKAEPADFFDLKGYIENLLSLTKAGPYIKFVAKEFPAFHPGQSAAIVLDGEEIGYIGQLHPMAAQKLGINGKAFACELIVDKVAERNVANAKEISKFPANKRDLALVVAENIAASDILDACREVAGSKLTQVNLFDVYQGQGVPEGHKSLAISLTIQDTEKTLEEDDINAVISVVLSELKDRFNAYLRD.

A tRNA-binding domain is found at 39 to 148; the sequence is AGEFNGVVVG…ADAPVGKDFR (110 aa). Positions 401–476 constitute a B5 domain; sequence PKLNKVQLRR…RIYGYNSIPN (76 aa). Residues Asp454, Asp460, Glu463, and Glu464 each coordinate Mg(2+). The FDX-ACB domain occupies 701-794; the sequence is SKFPANKRDL…LKDRFNAYLR (94 aa).

The protein belongs to the phenylalanyl-tRNA synthetase beta subunit family. Type 1 subfamily. As to quaternary structure, tetramer of two alpha and two beta subunits. The cofactor is Mg(2+).

The protein localises to the cytoplasm. The catalysed reaction is tRNA(Phe) + L-phenylalanine + ATP = L-phenylalanyl-tRNA(Phe) + AMP + diphosphate + H(+). In Mannheimia succiniciproducens (strain KCTC 0769BP / MBEL55E), this protein is Phenylalanine--tRNA ligase beta subunit.